The following is a 69-amino-acid chain: Conotoxin Gla-TxXI (69 aa).

Residues 1 to 25 (MVRVTSVGCFLLVIVSLNLVVLTNA) form the signal peptide. 4 cysteine pairs are disulfide-bonded: C26-C40, C33-C45, C39-C49, and C44-C53. Residue E29 is modified to 4-carboxyglutamate. Residue P56 is modified to Proline amide. The propeptide occupies 60 to 69 (AKLLEFFRQR).

Post-translationally, contains 4 disulfide bonds. In terms of tissue distribution, expressed by the venom duct.

It localises to the secreted. The protein is Conotoxin Gla-TxXI of Conus textile (Cloth-of-gold cone).